The chain runs to 527 residues: Peptide chain release factor 3 (527 aa).

The region spanning 9–277 (AKRRTFAIIS…AVVNWAPKPL (269 aa)) is the tr-type G domain. Residues 18–25 (SHPDAGKT), 86–90 (DTPGH), and 140–143 (NKLD) contribute to the GTP site.

It belongs to the TRAFAC class translation factor GTPase superfamily. Classic translation factor GTPase family. PrfC subfamily.

The protein localises to the cytoplasm. In terms of biological role, increases the formation of ribosomal termination complexes and stimulates activities of RF-1 and RF-2. It binds guanine nucleotides and has strong preference for UGA stop codons. It may interact directly with the ribosome. The stimulation of RF-1 and RF-2 is significantly reduced by GTP and GDP, but not by GMP. The sequence is that of Peptide chain release factor 3 from Pseudomonas syringae pv. syringae (strain B728a).